A 140-amino-acid chain; its full sequence is UPF0102 protein alr1796 (140 aa).

The protein belongs to the UPF0102 family.

In Nostoc sp. (strain PCC 7120 / SAG 25.82 / UTEX 2576), this protein is UPF0102 protein alr1796.